The chain runs to 147 residues: Small ribosomal subunit protein uS12 (147 aa).

It belongs to the universal ribosomal protein uS12 family. In terms of assembly, part of the 30S ribosomal subunit.

Functionally, with S4 and S5 plays an important role in translational accuracy. Located at the interface of the 30S and 50S subunits. In Saccharolobus solfataricus (strain ATCC 35092 / DSM 1617 / JCM 11322 / P2) (Sulfolobus solfataricus), this protein is Small ribosomal subunit protein uS12.